We begin with the raw amino-acid sequence, 164 residues long: UPF0304 protein YfbU (164 aa).

This sequence belongs to the UPF0304 family.

The protein is UPF0304 protein YfbU of Salmonella enteritidis PT4 (strain P125109).